The following is a 319-amino-acid chain: Ribosomal RNA large subunit methyltransferase F (319 aa).

Belongs to the methyltransferase superfamily. METTL16/RlmF family.

The protein resides in the cytoplasm. It catalyses the reaction adenosine(1618) in 23S rRNA + S-adenosyl-L-methionine = N(6)-methyladenosine(1618) in 23S rRNA + S-adenosyl-L-homocysteine + H(+). Functionally, specifically methylates the adenine in position 1618 of 23S rRNA. This Aliivibrio fischeri (strain ATCC 700601 / ES114) (Vibrio fischeri) protein is Ribosomal RNA large subunit methyltransferase F.